Consider the following 173-residue polypeptide: Large ribosomal subunit protein uL10 (173 aa).

The protein belongs to the universal ribosomal protein uL10 family. In terms of assembly, part of the ribosomal stalk of the 50S ribosomal subunit. The N-terminus interacts with L11 and the large rRNA to form the base of the stalk. The C-terminus forms an elongated spine to which L12 dimers bind in a sequential fashion forming a multimeric L10(L12)X complex.

Functionally, forms part of the ribosomal stalk, playing a central role in the interaction of the ribosome with GTP-bound translation factors. This is Large ribosomal subunit protein uL10 from Thiobacillus denitrificans (strain ATCC 25259 / T1).